We begin with the raw amino-acid sequence, 300 residues long: Ribonuclease HIII (300 aa).

One can recognise an RNase H type-2 domain in the interval Arg86 to Gln300. Residues Asp92, Glu93, and Asp196 each coordinate a divalent metal cation.

Belongs to the RNase HII family. RnhC subfamily. The cofactor is Mn(2+). Requires Mg(2+) as cofactor.

It localises to the cytoplasm. It carries out the reaction Endonucleolytic cleavage to 5'-phosphomonoester.. In terms of biological role, endonuclease that specifically degrades the RNA of RNA-DNA hybrids. This is Ribonuclease HIII from Chlamydia trachomatis serovar L2 (strain ATCC VR-902B / DSM 19102 / 434/Bu).